Here is a 512-residue protein sequence, read N- to C-terminus: Anaerobic nitric oxide reductase transcription regulator NorR (512 aa).

The Sigma-54 factor interaction domain maps to 190–419; sequence MIGESLAMQE…LEHVISRAAV (230 aa). ATP is bound by residues 218–225 and 281–290; these read GETGVGKE and ADNGTLFLDE. Residues 487-506 constitute a DNA-binding region (H-T-H motif); it reads WAATARALQLDTGNLHRLAK.

It functions in the pathway nitrogen metabolism; nitric oxide reduction. Required for the expression of anaerobic nitric oxide (NO) reductase, acts as a transcriptional activator for at least the norVW operon. Activation also requires sigma-54. This is Anaerobic nitric oxide reductase transcription regulator NorR from Aliivibrio fischeri (strain ATCC 700601 / ES114) (Vibrio fischeri).